We begin with the raw amino-acid sequence, 231 residues long: MAGLVDFQDEEQVKSFLENMEVECHYQCYREKDPEGCYRLVDYLEGIQKNFDEAAKVLKFNCEKYGHGDSCYKLGAYYVTGKGGLTQDLKAASSCFLMACEKPGKKSVESCHNVGLLAHDGQVNEDGQPDLGKARDYYSRACDGGYAASCFNLSAMFLQGAPGFPKDMGLACKYSMKACDLGHVWACANASRMYKLGDGVDKDEAKAEVLKNRARQLHKEQQKNVQPLTFG.

Position 2 is an N-acetylalanine (A2). Sel1-like repeat units lie at residues 34 to 66 (PEGC…EKYG), 68 to 104 (GDSC…EKPG), 108 to 146 (VESC…DGGY), 147 to 183 (AASC…DLGH), and 184 to 219 (VWAC…QLHK).

Belongs to the hcp beta-lactamase family. As to quaternary structure, interacts with CHCHD4/MIA40 through transient intermolecular disulfide bonds.

It is found in the mitochondrion intermembrane space. Required for assembly of mitochondrial respiratory chain complex I and complex IV. This is Cytochrome c oxidase assembly factor 7 (Coa7) from Mus musculus (Mouse).